Here is a 185-residue protein sequence, read N- to C-terminus: Dehydrin ERD14 (185 aa).

Basic and acidic residues-rich tracts occupy residues 1–13 (MAEE…EQEV), 25–45 (VTDR…KPEE), 52–78 (FEQK…HRSD), and 103–134 (KPTT…KPED). Disordered regions lie at residues 1–138 (MAEE…GSAV) and 166–185 (EKLP…KDKE). Alanine 2 carries the N-acetylalanine modification. Serine 59 is modified (phosphoserine). 2 consecutive repeat copies span residues 112–132 (EEEK…HKKP) and 154–174 (PVEK…YHPK). The segment at 112-174 (EEEKKGFMEK…KEKLPGYHPK (63 aa)) is 2 X 21 AA repeats, Lys-rich.

Belongs to the plant dehydrin family. As to expression, in stems, cauline leaves, roots and flowers. Low levels found in maturing seeds. Absent in dry seeds.

Functionally, intrinsically disordered protein acting as a chaperone. Prevents heat-induced aggregation and/or inactivation of various substrates. Binds to acidic phospholipid vesicles without affecting membrane fluidity. In Arabidopsis thaliana (Mouse-ear cress), this protein is Dehydrin ERD14 (ERD14).